We begin with the raw amino-acid sequence, 132 residues long: Profilin (132 aa).

Belongs to the profilin family. Occurs in many kinds of cells as a complex with monomeric actin in a 1:1 ratio.

Its subcellular location is the cytoplasm. It is found in the cytoskeleton. In terms of biological role, binds to actin and affects the structure of the cytoskeleton. At high concentrations, profilin prevents the polymerization of actin, whereas it enhances it at low concentrations. By binding to PIP2, it inhibits the formation of IP3 and DG. This is Profilin from Naegleria pringsheimi (Amoeba).